A 122-amino-acid polypeptide reads, in one-letter code: Small ribosomal subunit protein uS13 (122 aa).

Residues 95-116 (GLPCRGQKTKTNARTRKGKKKT) show a composition bias toward basic residues. Residues 95–122 (GLPCRGQKTKTNARTRKGKKKTVGAATK) form a disordered region.

Belongs to the universal ribosomal protein uS13 family. As to quaternary structure, part of the 30S ribosomal subunit. Forms a loose heterodimer with protein S19. Forms two bridges to the 50S subunit in the 70S ribosome.

In terms of biological role, located at the top of the head of the 30S subunit, it contacts several helices of the 16S rRNA. In the 70S ribosome it contacts the 23S rRNA (bridge B1a) and protein L5 of the 50S subunit (bridge B1b), connecting the 2 subunits; these bridges are implicated in subunit movement. Contacts the tRNAs in the A and P-sites. The sequence is that of Small ribosomal subunit protein uS13 from Aliarcobacter butzleri (strain RM4018) (Arcobacter butzleri).